Here is a 205-residue protein sequence, read N- to C-terminus: Imidazoleglycerol-phosphate dehydratase (205 aa).

The protein belongs to the imidazoleglycerol-phosphate dehydratase family.

The catalysed reaction is D-erythro-1-(imidazol-4-yl)glycerol 3-phosphate = 3-(imidazol-4-yl)-2-oxopropyl phosphate + H2O. Its pathway is amino-acid biosynthesis; L-histidine biosynthesis; L-histidine from 5-phospho-alpha-D-ribose 1-diphosphate: step 6/9. This Phaffia rhodozyma (Yeast) protein is Imidazoleglycerol-phosphate dehydratase (HIS3).